The following is a 261-amino-acid chain: Indole-3-glycerol phosphate synthase (261 aa).

The protein belongs to the TrpC family.

The enzyme catalyses 1-(2-carboxyphenylamino)-1-deoxy-D-ribulose 5-phosphate + H(+) = (1S,2R)-1-C-(indol-3-yl)glycerol 3-phosphate + CO2 + H2O. It functions in the pathway amino-acid biosynthesis; L-tryptophan biosynthesis; L-tryptophan from chorismate: step 4/5. This is Indole-3-glycerol phosphate synthase from Burkholderia pseudomallei (strain 668).